A 239-amino-acid polypeptide reads, in one-letter code: 1-(5-phosphoribosyl)-5-[(5-phosphoribosylamino)methylideneamino] imidazole-4-carboxamide isomerase (239 aa).

The Proton acceptor role is filled by D8. D129 (proton donor) is an active-site residue.

This sequence belongs to the HisA/HisF family.

It localises to the cytoplasm. The catalysed reaction is 1-(5-phospho-beta-D-ribosyl)-5-[(5-phospho-beta-D-ribosylamino)methylideneamino]imidazole-4-carboxamide = 5-[(5-phospho-1-deoxy-D-ribulos-1-ylimino)methylamino]-1-(5-phospho-beta-D-ribosyl)imidazole-4-carboxamide. It functions in the pathway amino-acid biosynthesis; L-histidine biosynthesis; L-histidine from 5-phospho-alpha-D-ribose 1-diphosphate: step 4/9. This chain is 1-(5-phosphoribosyl)-5-[(5-phosphoribosylamino)methylideneamino] imidazole-4-carboxamide isomerase, found in Legionella pneumophila (strain Corby).